The sequence spans 667 residues: Alpha-1,4-glucan:maltose-1-phosphate maltosyltransferase (667 aa).

Residues Lys-261, Gln-321, and Asp-356 each contribute to the alpha-maltose 1-phosphate site. Catalysis depends on Asp-392, which acts as the Nucleophile. Position 393 (Asn-393) interacts with alpha-maltose 1-phosphate. The Proton donor role is filled by Glu-421. 534 to 535 (KY) provides a ligand contact to alpha-maltose 1-phosphate.

It belongs to the glycosyl hydrolase 13 family. GlgE subfamily. As to quaternary structure, homodimer.

It catalyses the reaction alpha-maltose 1-phosphate + [(1-&gt;4)-alpha-D-glucosyl](n) = [(1-&gt;4)-alpha-D-glucosyl](n+2) + phosphate. In terms of biological role, maltosyltransferase that uses maltose 1-phosphate (M1P) as the sugar donor to elongate linear or branched alpha-(1-&gt;4)-glucans. Is involved in a branched alpha-glucan biosynthetic pathway from trehalose, together with TreS, Mak and GlgB. The sequence is that of Alpha-1,4-glucan:maltose-1-phosphate maltosyltransferase from Methylacidiphilum infernorum (isolate V4) (Methylokorus infernorum (strain V4)).